Here is a 342-residue protein sequence, read N- to C-terminus: Protease HtpX homolog (342 aa).

The next 2 helical transmembrane spans lie at 6 to 26 (TAML…LIGG) and 28 to 48 (GGMM…YWNS). Position 130 (His130) interacts with Zn(2+). Glu131 is a catalytic residue. His134 lines the Zn(2+) pocket. Transmembrane regions (helical) follow at residues 145–165 (ITAT…FFGG) and 173–193 (GGGI…AMLV). A Zn(2+)-binding site is contributed by Glu202. Residues 290-342 (PQHSKPAASGPWGSSAERSTDDPWGVKGGASTRSVPKIGRRGKDNDAPKGPWN) are disordered.

It belongs to the peptidase M48B family. The cofactor is Zn(2+).

Its subcellular location is the cell inner membrane. The polypeptide is Protease HtpX homolog (Allorhizobium ampelinum (strain ATCC BAA-846 / DSM 112012 / S4) (Agrobacterium vitis (strain S4))).